A 513-amino-acid chain; its full sequence is ATP synthase subunit alpha (513 aa).

An ATP-binding site is contributed by 169-176 (GDRQTGKT).

Belongs to the ATPase alpha/beta chains family. F-type ATPases have 2 components, CF(1) - the catalytic core - and CF(0) - the membrane proton channel. CF(1) has five subunits: alpha(3), beta(3), gamma(1), delta(1), epsilon(1). CF(0) has three main subunits: a(1), b(2) and c(9-12). The alpha and beta chains form an alternating ring which encloses part of the gamma chain. CF(1) is attached to CF(0) by a central stalk formed by the gamma and epsilon chains, while a peripheral stalk is formed by the delta and b chains.

It is found in the cell inner membrane. It carries out the reaction ATP + H2O + 4 H(+)(in) = ADP + phosphate + 5 H(+)(out). Functionally, produces ATP from ADP in the presence of a proton gradient across the membrane. The alpha chain is a regulatory subunit. This is ATP synthase subunit alpha from Shewanella sp. (strain ANA-3).